Consider the following 583-residue polypeptide: SHC-transforming protein 1 (583 aa).

N-acetylmethionine is present on methionine 1. 2 disordered regions span residues methionine 1–glutamate 92 and lysine 113–histidine 137. Residues glutamate 16–proline 44 are compositionally biased toward low complexity. Serine 36 is modified (phosphoserine). Serine 139 is subject to Phosphoserine. The residue at position 154 (lysine 154) is an N6-acetyllysine. Residues methionine 156–glutamate 339 form the PID domain. Positions glutamate 340–proline 487 are CH1. Phosphotyrosine is present on residues tyrosine 349 and tyrosine 350. Residues alanine 372–cysteine 416 are disordered. Tyrosine 427 carries the phosphotyrosine modification. A Phosphoserine modification is found at serine 453. One can recognise an SH2 domain in the interval tryptophan 488 to valine 579.

Interacts with CPNE3; this interaction may mediate the binding of CPNE3 with ERBB2. Interacts with the Trk receptors NTRK1, NTRK2 and NTRK3; in a phosphotyrosine-dependent manner. Interacts with the NPXY motif of tyrosine-phosphorylated IGF1R and INSR in vitro via the PID domain. Once activated, binds to GRB2. Interacts with tyrosine-phosphorylated CD3T and DDR2. Interacts with the N-terminal region of APS. Interacts with phosphorylated LRP1 and IRS4. Interacts with INPP5D/SHIP1 and INPPL1/SHIP2. Interacts with ALK, GAB2, GRB7 and KIT. Interacts with PTPN6/SHP (tyrosine phosphorylated). Identified in a complex containing FGFR4, NCAM1, CDH2, PLCG1, FRS2, SRC, SHC1, GAP43 and CTTN. Interacts with FLT4 (tyrosine-phosphorylated). Interacts with EPHB1 and GRB2; activates the MAPK/ERK cascade to regulate cell migration. Interacts with PDGFRB (tyrosine-phosphorylated). Interacts with ERBB4. Interacts with TEK/TIE2 (tyrosine-phosphorylated). Interacts with PTK2/FAK1. Interacts with CEACAM1; this interaction is CEACAM1-phosphorylation-dependent and mediates interaction with EGFR or INSR resulting in decrease coupling of SHC1 to the MAPK3/ERK1-MAPK1/ERK2 pathway. Interacts (via PID domain) with PEAK1 (when phosphorylated). Found in a complex with PPP1CA, PPP1CC, SHC1 and PEAK1. In terms of processing, phosphorylated by activated epidermal growth factor receptor. Phosphorylated in response to KIT signaling. Tyrosine phosphorylated in response to FLT3 and FLT4 signaling and by ligand-activated ALK. Tyrosine phosphorylated by ligand-activated PDGFRB. Tyrosine phosphorylated by TEK/TIE2. May be tyrosine phosphorylated by activated PTK2/FAK1. Tyrosine phosphorylated by activated PTK2B/PYK2. Dephosphorylation by PTPN2 may regulate interaction with GRB2.

It localises to the cytoplasm. The protein resides in the cell junction. Its subcellular location is the focal adhesion. Its function is as follows. Signaling adapter that couples activated growth factor receptors to signaling pathways. Participates in a signaling cascade initiated by activated KIT and KITLG/SCF. Participates in signaling downstream of the angiopoietin receptor TEK/TIE2, and plays a role in the regulation of endothelial cell migration and sprouting angiogenesis. This chain is SHC-transforming protein 1 (SHC1), found in Pongo abelii (Sumatran orangutan).